Reading from the N-terminus, the 224-residue chain is Deoxyribose-phosphate aldolase (224 aa).

Catalysis depends on D92, which acts as the Proton donor/acceptor. K154 functions as the Schiff-base intermediate with acetaldehyde in the catalytic mechanism. K183 acts as the Proton donor/acceptor in catalysis.

The protein belongs to the DeoC/FbaB aldolase family. DeoC type 1 subfamily.

It is found in the cytoplasm. The enzyme catalyses 2-deoxy-D-ribose 5-phosphate = D-glyceraldehyde 3-phosphate + acetaldehyde. Its pathway is carbohydrate degradation; 2-deoxy-D-ribose 1-phosphate degradation; D-glyceraldehyde 3-phosphate and acetaldehyde from 2-deoxy-alpha-D-ribose 1-phosphate: step 2/2. Its function is as follows. Catalyzes a reversible aldol reaction between acetaldehyde and D-glyceraldehyde 3-phosphate to generate 2-deoxy-D-ribose 5-phosphate. The polypeptide is Deoxyribose-phosphate aldolase (Mannheimia succiniciproducens (strain KCTC 0769BP / MBEL55E)).